A 191-amino-acid polypeptide reads, in one-letter code: Ribonuclease MC (191 aa).

Glutamine 9 provides a ligand contact to RNA. A disulfide bridge links cysteine 15 with cysteine 23. Residues histidine 34, 72–73, arginine 75, phenylalanine 81, 84–85, and 88–89 each bind RNA; these read NV, HE, and KH. The active-site Proton donor is histidine 34. Cystine bridges form between cysteine 48–cysteine 92, cysteine 152–cysteine 185, and cysteine 169–cysteine 180. Glutamate 85 is an active-site residue. Histidine 89 serves as the catalytic Proton acceptor.

The protein belongs to the RNase T2 family.

It catalyses the reaction a ribonucleotidyl-ribonucleotide-RNA + H2O = a 3'-end 3'-phospho-ribonucleotide-RNA + a 5'-end dephospho-ribonucleoside-RNA + H(+). Functionally, ribonuclease cleaving preferentially the 5'-side of uridine. The chain is Ribonuclease MC from Momordica charantia (Bitter gourd).